Here is a 153-residue protein sequence, read N- to C-terminus: Protein SprT-like (153 aa).

The region spanning 6-148 (LQQLTEQLSL…CGKCGGKIKE (143 aa)) is the SprT-like domain. Residue H67 coordinates Zn(2+). E68 is an active-site residue. H71 contacts Zn(2+).

This sequence belongs to the SprT family. It depends on Zn(2+) as a cofactor.

The protein localises to the cytoplasm. The polypeptide is Protein SprT-like (Bacillus licheniformis (strain ATCC 14580 / DSM 13 / JCM 2505 / CCUG 7422 / NBRC 12200 / NCIMB 9375 / NCTC 10341 / NRRL NRS-1264 / Gibson 46)).